Here is a 258-residue protein sequence, read N- to C-terminus: 5'-nucleotidase SurE (258 aa).

4 residues coordinate a divalent metal cation: Asp18, Asp19, Ser49, and Asn102.

Belongs to the SurE nucleotidase family. It depends on a divalent metal cation as a cofactor.

The protein localises to the cytoplasm. The catalysed reaction is a ribonucleoside 5'-phosphate + H2O = a ribonucleoside + phosphate. Functionally, nucleotidase that shows phosphatase activity on nucleoside 5'-monophosphates. The sequence is that of 5'-nucleotidase SurE from Vibrio parahaemolyticus serotype O3:K6 (strain RIMD 2210633).